The chain runs to 99 residues: Putative gene 45 protein (99 aa).

The protein is Putative gene 45 protein (45) of Bacillus phage SP01 (Bacteriophage SP01).